Consider the following 319-residue polypeptide: Cytochrome c biogenesis protein CcsA (319 aa).

Transmembrane regions (helical) follow at residues 17 to 37 (TISI…LGGL), 44 to 64 (GMIV…ASSG), 68 to 88 (LSNL…LHTI), 143 to 163 (MLLS…ILII), 223 to 243 (VISL…VWAN), 257 to 271 (TWAF…IYLH), and 286 to 306 (VASI…LLGI).

It belongs to the CcmF/CycK/Ccl1/NrfE/CcsA family. In terms of assembly, may interact with Ccs1.

The protein resides in the plastid. It localises to the chloroplast thylakoid membrane. Its function is as follows. Required during biogenesis of c-type cytochromes (cytochrome c6 and cytochrome f) at the step of heme attachment. The polypeptide is Cytochrome c biogenesis protein CcsA (Lolium perenne (Perennial ryegrass)).